We begin with the raw amino-acid sequence, 278 residues long: Small ribosomal subunit protein uS3 (278 aa).

One can recognise a KH type-2 domain in the interval 39–107; it reads LRKAISKKYV…KVQLNIVEIS (69 aa). The tract at residues 255–278 is disordered; it reads AEIPAEEKPKRVVKKAENITKEEE.

Belongs to the universal ribosomal protein uS3 family. Part of the 30S ribosomal subunit. Forms a tight complex with proteins S10 and S14.

Functionally, binds the lower part of the 30S subunit head. Binds mRNA in the 70S ribosome, positioning it for translation. This Dehalococcoides mccartyi (strain ATCC BAA-2100 / JCM 16839 / KCTC 5957 / BAV1) protein is Small ribosomal subunit protein uS3.